The primary structure comprises 750 residues: Catalase A (750 aa).

Residues 30–49 (ERDTADAHTQQPLTTDHGVR) are disordered. Active-site residues include His-93 and Asn-166. A heme-binding site is contributed by Tyr-380.

This sequence belongs to the catalase family. Heme is required as a cofactor.

It localises to the peroxisome matrix. It catalyses the reaction 2 H2O2 = O2 + 2 H2O. In terms of biological role, catalyzes the degradation of hydrogen peroxide (H(2)O(2)) generated by peroxisomal oxidases to water and oxygen, thereby protecting cells from the toxic effects of hydrogen peroxide. The protein is Catalase A (catA) of Aspergillus fumigatus (strain ATCC MYA-4609 / CBS 101355 / FGSC A1100 / Af293) (Neosartorya fumigata).